Here is a 620-residue protein sequence, read N- to C-terminus: Glutathione-regulated potassium-efflux system protein KefC (620 aa).

Helical transmembrane passes span 4 to 24 (HTLL…PIAV), 26 to 46 (LGLG…PWGL), 54 to 74 (SILH…GLEL), 90 to 110 (GALQ…FLGL), 114 to 134 (VAEL…MQAM), 149 to 169 (FAVL…IPLL), 178 to 198 (LGAF…VVLL), 218 to 238 (VFSA…EEVG), 270 to 290 (GLLL…GTLV), 294 to 314 (LRIL…LWLV), 327 to 347 (WFAV…GAAQ), and 359 to 379 (ALTL…VLLT). An RCK N-terminal domain is found at 399–518 (QPRVIVAGFG…AGVAMPERET (120 aa)). A disordered region spans residues 599-620 (QGTAEGKHSGEAADEPEVKPSI).

It belongs to the monovalent cation:proton antiporter 2 (CPA2) transporter (TC 2.A.37) family. KefC subfamily. Homodimer. Interacts with the regulatory subunit KefF.

Its subcellular location is the cell inner membrane. Functionally, pore-forming subunit of a potassium efflux system that confers protection against electrophiles. Catalyzes K(+)/H(+) antiport. In Salmonella choleraesuis (strain SC-B67), this protein is Glutathione-regulated potassium-efflux system protein KefC.